The primary structure comprises 336 residues: Immune-associated nucleotide-binding protein 13 (336 aa).

In terms of domain architecture, AIG1-type G spans 15–221; that stretch reads KPERTLVLLG…YMADLSHELR (207 aa). Residues 24 to 31 are G1; sequence GRTGNGKS. GTP-binding positions include 24 to 32 and Ser45; that span reads GRTGNGKSA. Residues 51-55 are G2; it reads FITKE. The G3 stretch occupies residues 73–76; sequence DTPG. Residues 143–146 form a G4 region; the sequence is TNED. The G5 stretch occupies residues 179-181; that stretch reads DNS. Asn180 serves as a coordination point for GTP. Positions 265–328 form a coiled coil; that stretch reads KEKISNQLKE…EKETASLRTE (64 aa).

Belongs to the TRAFAC class TrmE-Era-EngA-EngB-Septin-like GTPase superfamily. AIG1/Toc34/Toc159-like paraseptin GTPase family. IAN subfamily. As to expression, expressed in pollen grains.

This is Immune-associated nucleotide-binding protein 13 from Arabidopsis thaliana (Mouse-ear cress).